We begin with the raw amino-acid sequence, 901 residues long: HTH-type transcriptional regulator MalT (901 aa).

ATP is bound at residue 39-46 (SPAGYGKT). The HTH luxR-type domain occupies 829 to 894 (ELIRTSPLTQ…DAVQHAQQLL (66 aa)). Residues 853 to 872 (NEQIAGELEVAATTIKTHIR) constitute a DNA-binding region (H-T-H motif).

Belongs to the MalT family. As to quaternary structure, monomer in solution. Oligomerizes to an active state in the presence of the positive effectors ATP and maltotriose.

Activated by ATP and maltotriose, which are both required for DNA binding. Positively regulates the transcription of the maltose regulon whose gene products are responsible for uptake and catabolism of malto-oligosaccharides. Specifically binds to the promoter region of its target genes, recognizing a short DNA motif called the MalT box. This is HTH-type transcriptional regulator MalT from Escherichia coli (strain ATCC 8739 / DSM 1576 / NBRC 3972 / NCIMB 8545 / WDCM 00012 / Crooks).